A 351-amino-acid polypeptide reads, in one-letter code: Peptide chain release factor 1 (351 aa).

Glutamine 229 is subject to N5-methylglutamine.

It belongs to the prokaryotic/mitochondrial release factor family. Post-translationally, methylated by PrmC. Methylation increases the termination efficiency of RF1.

The protein resides in the cytoplasm. Functionally, peptide chain release factor 1 directs the termination of translation in response to the peptide chain termination codons UAG and UAA. This chain is Peptide chain release factor 1, found in Cereibacter sphaeroides (strain KD131 / KCTC 12085) (Rhodobacter sphaeroides).